The sequence spans 347 residues: tRNA pseudouridine synthase D (347 aa).

Catalysis depends on D81, which acts as the Nucleophile. Positions 158 to 304 (GVPNYFGNQR…MRHDRRAIAL (147 aa)) constitute a TRUD domain.

This sequence belongs to the pseudouridine synthase TruD family.

It carries out the reaction uridine(13) in tRNA = pseudouridine(13) in tRNA. In terms of biological role, responsible for synthesis of pseudouridine from uracil-13 in transfer RNAs. The protein is tRNA pseudouridine synthase D of Vibrio vulnificus (strain YJ016).